Reading from the N-terminus, the 116-residue chain is Iron-sulfur cluster insertion protein ErpA (116 aa).

Iron-sulfur cluster-binding residues include Cys-44, Cys-108, and Cys-110.

It belongs to the HesB/IscA family. Homodimer. Iron-sulfur cluster serves as cofactor.

Its function is as follows. Required for insertion of 4Fe-4S clusters for at least IspG. The chain is Iron-sulfur cluster insertion protein ErpA from Pseudomonas fluorescens (strain Pf0-1).